The following is a 326-amino-acid chain: Microtubule-associated protein RP/EB family member 2 (326 aa).

Ser9 bears the Phosphoserine mark. In terms of domain architecture, Calponin-homology (CH) spans 56–158 (TMSRHDIIAW…FIQWFKKFYD (103 aa)). Tyr166 is modified (phosphotyrosine). Disordered regions lie at residues 170-239 (EARQ…DKDL) and 297-326 (YASDEQEGQTEEPEAEEQAHDQQPQQQEEY). Positions 186 to 326 (QIFNLPKKSH…DQQPQQQEEY (141 aa)) are DCTN1-binding. Positions 199 to 233 (SPTAGAAKSSPASKPGSTPSRPSSAKRASSSGSAS) are enriched in low complexity. A phosphoserine mark is found at Ser218 and Ser235. Positions 235–305 (SDKDLETQVI…LYASDEQEGQ (71 aa)) constitute an EB1 C-terminal domain. The APC-binding stretch occupies residues 258–301 (EGVEKERDFYFGKLREIELLCQEHGQENDDLVQRLMEVLYASDE). Over residues 300-312 (DEQEGQTEEPEAE) the composition is skewed to acidic residues. Low complexity predominate over residues 317 to 326 (DQQPQQQEEY).

Belongs to the MAPRE family. As to quaternary structure, interacts with DCTN1. Interacts with APC (via C-terminal). Interacts with monomeric and polymerized tubulin. Interacts with SLAIN1. Interacts (via the N-terminal region) with BAG1. Interacts with ASB14. In terms of processing, ubiquitinated in an ASB14-dependent manner; leading to proteasomal degradation. Phosphorylated at Ser-235 by CK2 leading to enhanced cell adhesion. Phosphorylated by CDK1 and AURKB during mitosis reduces the binding affinity of MAPRE2 for microtubules. As to expression, expressed during early stages of apico-basal epithelial differentiation but down-regulated in most cells at later stages.

It is found in the cytoplasm. The protein resides in the cytoskeleton. The protein localises to the spindle. In terms of biological role, adapter protein that is involved in microtubule polymerization, and spindle function by stabilizing microtubules and anchoring them at centrosomes. Therefore, ensures mitotic progression and genome stability. Acts as a central regulator of microtubule reorganization in apico-basal epithelial differentiation. Plays a role during oocyte meiosis by regulating microtubule dynamics. Participates in neurite growth by interacting with plexin B3/PLXNB3 and microtubule reorganization during apico-basal epithelial differentiation. Plays also an essential role for cell migration and focal adhesion dynamics. Mechanistically, recruits HAX1 to microtubules in order to regulate focal adhesion dynamics. The polypeptide is Microtubule-associated protein RP/EB family member 2 (Mapre2) (Mus musculus (Mouse)).